Here is a 416-residue protein sequence, read N- to C-terminus: UDP-N-acetylglucosamine 1-carboxyvinyltransferase (416 aa).

A phosphoenolpyruvate-binding site is contributed by lysine 22–asparagine 23. Residue arginine 92 coordinates UDP-N-acetyl-alpha-D-glucosamine. The Proton donor role is filled by cysteine 116. Position 116 is a 2-(S-cysteinyl)pyruvic acid O-phosphothioketal (cysteine 116). UDP-N-acetyl-alpha-D-glucosamine is bound by residues arginine 121–glutamine 125, aspartate 304, and isoleucine 326.

It belongs to the EPSP synthase family. MurA subfamily.

Its subcellular location is the cytoplasm. The catalysed reaction is phosphoenolpyruvate + UDP-N-acetyl-alpha-D-glucosamine = UDP-N-acetyl-3-O-(1-carboxyvinyl)-alpha-D-glucosamine + phosphate. Its pathway is cell wall biogenesis; peptidoglycan biosynthesis. Its function is as follows. Cell wall formation. Adds enolpyruvyl to UDP-N-acetylglucosamine. The chain is UDP-N-acetylglucosamine 1-carboxyvinyltransferase from Aromatoleum aromaticum (strain DSM 19018 / LMG 30748 / EbN1) (Azoarcus sp. (strain EbN1)).